Here is a 134-residue protein sequence, read N- to C-terminus: Putative pre-16S rRNA nuclease (134 aa).

This sequence belongs to the YqgF nuclease family.

Its subcellular location is the cytoplasm. Could be a nuclease involved in processing of the 5'-end of pre-16S rRNA. The protein is Putative pre-16S rRNA nuclease of Helicobacter pylori (strain G27).